The following is a 479-amino-acid chain: Solute carrier family 7 member 13 (479 aa).

Residues 1–14 (MAMDIEKKIYLKRQ) lie on the Cytoplasmic side of the membrane. The chain crosses the membrane as a helical span at residues 15 to 35 (LGYFWGTNFLIINIIGAGIFV). The Extracellular segment spans residues 36–47 (SPKGVLQYSSMN). The chain crosses the membrane as a helical span at residues 48–68 (VGVSLCVWVFCAVLSMTSTLC). Residues 69–89 (AAEIGITFPYTVAHYYFLKRC) lie on the Cytoplasmic side of the membrane. The helical transmembrane segment at 90–110 (FGPFVAFLRLWTSLFTGPGVL) threads the bilayer. Over 111–129 (ASQALLLAEYGIQPFYPSC) the chain is Extracellular. Residues 130-150 (SAPAVPKKCLALAMLWIVGIL) form a helical membrane-spanning segment. Residues 151–165 (NSRGVKELSWLQTVS) lie on the Cytoplasmic side of the membrane. The chain crosses the membrane as a helical span at residues 166–186 (MVLKMGILSFISLSGLFLLVT). Over 187–208 (GRKENVRRLQNAFDAEFPEVSR) the chain is Extracellular. A helical membrane pass occupies residues 209–229 (LIEAIFQGYFAFSGGGSFTYV). Over 230 to 242 (AGELKEPSKTIPR) the chain is Cytoplasmic. A helical transmembrane segment spans residues 243-263 (CIFTALPLVTVVYLLANLSYL). At 264–289 (TVLSPQELLSSDAVALTWTDRVIPQL) the chain is on the extracellular side. Residues 290 to 310 (TWSVPFAISASLFSNLVTSVF) form a helical membrane-spanning segment. Over 311–338 (ETSRTSYIASRNGQLPLLCSTLNVHSSP) the chain is Cytoplasmic. Residues 339 to 359 (FIAVLLDVSMGSIAIVLTNLI) form a helical membrane-spanning segment. A topological domain (extracellular) is located at residue glutamate 360. Residues 361–381 (LINYLFFVFSIWTVLSVIGIL) form a helical membrane-spanning segment. Residues 382 to 396 (KLRYQEPNLHRPYKV) lie on the Cytoplasmic side of the membrane. Residues 397–417 (FSPFLFITAAISLSMVLIPLI) form a helical membrane-spanning segment. At 418–423 (KSPKMQ) the chain is on the extracellular side. A helical transmembrane segment spans residues 424–444 (YIYVFLFFLGGLLFYVPLIHF). The Cytoplasmic segment spans residues 445–479 (KLKLIWFQKLTCYLQLLFNICIPDVSDEHVAEEES).

It belongs to the amino acid-polyamine-organocation (APC) superfamily. In terms of assembly, disulfide-linked heterodimer composed of the catalytic light subunit SLC7A13 and the heavy subunit SLC3A1.

Its subcellular location is the apical cell membrane. The enzyme catalyses L-cystine(out) + L-aspartate(in) = L-cystine(in) + L-aspartate(out). It catalyses the reaction L-cystine(out) = L-cystine(in). The catalysed reaction is L-aspartate(in) + L-glutamate(out) = L-aspartate(out) + L-glutamate(in). It carries out the reaction L-aspartate(in) + L-glutamine(out) = L-aspartate(out) + L-glutamine(in). The enzyme catalyses L-aspartate(in) + L-methionine(out) = L-aspartate(out) + L-methionine(in). It catalyses the reaction L-leucine(out) + L-aspartate(in) = L-leucine(in) + L-aspartate(out). The catalysed reaction is L-valine(out) + L-aspartate(in) = L-valine(in) + L-aspartate(out). It carries out the reaction L-aspartate(in) + L-phenylalanine(out) = L-aspartate(out) + L-phenylalanine(in). The enzyme catalyses L-tyrosine(out) + L-aspartate(in) = L-tyrosine(in) + L-aspartate(out). It catalyses the reaction L-tryptophan(out) + L-aspartate(in) = L-tryptophan(in) + L-aspartate(out). In terms of biological role, associates with SLC3A1/rBAT to form a functional heterodimeric complex that transports anionic and neutral amino acids across the apical plasma membrane of renal epithelium. Preferentially mediates exchange transport, but can also operate via facilitated diffusion. May act as a major transporter for L-cystine in late proximal tubules, ensuring its reabsorption from the luminal fluid in exchange for cytosolic L-glutamate or L-aspartate. This is Solute carrier family 7 member 13 (Slc7a13) from Rattus norvegicus (Rat).